Consider the following 621-residue polypeptide: 1-deoxy-D-xylulose-5-phosphate synthase (621 aa).

Residues H80 and 121 to 123 (GHS) each bind thiamine diphosphate. D152 lines the Mg(2+) pocket. Residues 153 to 154 (GA), N181, Y288, and E370 contribute to the thiamine diphosphate site. N181 provides a ligand contact to Mg(2+).

The protein belongs to the transketolase family. DXPS subfamily. As to quaternary structure, homodimer. Requires Mg(2+) as cofactor. Thiamine diphosphate serves as cofactor.

It catalyses the reaction D-glyceraldehyde 3-phosphate + pyruvate + H(+) = 1-deoxy-D-xylulose 5-phosphate + CO2. It functions in the pathway metabolic intermediate biosynthesis; 1-deoxy-D-xylulose 5-phosphate biosynthesis; 1-deoxy-D-xylulose 5-phosphate from D-glyceraldehyde 3-phosphate and pyruvate: step 1/1. In terms of biological role, catalyzes the acyloin condensation reaction between C atoms 2 and 3 of pyruvate and glyceraldehyde 3-phosphate to yield 1-deoxy-D-xylulose-5-phosphate (DXP). This chain is 1-deoxy-D-xylulose-5-phosphate synthase, found in Vibrio vulnificus (strain CMCP6).